We begin with the raw amino-acid sequence, 75 residues long: MPQISRYSNEQVEQLLAELLNVLEKHKAPTDLSLMVLGNMVTNLINTSIAPAQRQAIANSFASALQSSINEDKAH.

Belongs to the UPF0352 family.

The chain is UPF0352 protein YejL from Shigella flexneri.